We begin with the raw amino-acid sequence, 434 residues long: MLFQVVLISGMQWGDEGKGKLVSLLSKDFDLVARYNGGHNSGHELFLDGVKYKLHLLPCGCLYPNTVNVLGNGVVVHLESLINEIDNLTKLGVDLTNRLFISERAHLVFDLHIAVDAQLENEQGEHSTSIGTTKRGIGPTNSTKCKRTGIQIGEMLNWDNFEKLLSKLTYKLCHENKVFTNSDTRDLLNKQLEQHKVNFSKIADSVVDTSYMIQKYIKEGKKVFFEGANGSLLDLALGTYPYVTSSNTTTSGVYNGLGINPNVKILKVGVLKAYQTRVGKGPFPTELFDENFNKLQKFGAEFGVTTGRVRRCGWLDLVAAKYVQNFSGFDLINLSKLDILSQFDEIKLCTHYKHKLTGKLLEEGRYPSCCYQYDEYEPVYKTMPGWKTDISKFKTFEELPQNAQNYVLFIEEYLGVFIYWIGTGRDVNSMIVRT.

GTP-binding positions include 14–20 (GDEGKGK) and 42–44 (GHE). D15 serves as the catalytic Proton acceptor. Positions 15 and 42 each coordinate Mg(2+). IMP is bound by residues 15–18 (DEGK), 40–43 (NSGH), T133, R147, N229, T244, and R308. H43 functions as the Proton donor in the catalytic mechanism. Position 304–310 (304–310 (VTTGRVR)) interacts with substrate. GTP contacts are provided by residues R310, 336-338 (KLD), and 422-424 (GTG).

The protein belongs to the adenylosuccinate synthetase family. As to quaternary structure, homodimer. The cofactor is Mg(2+).

It is found in the cytoplasm. It carries out the reaction IMP + L-aspartate + GTP = N(6)-(1,2-dicarboxyethyl)-AMP + GDP + phosphate + 2 H(+). The protein operates within purine metabolism; AMP biosynthesis via de novo pathway; AMP from IMP: step 1/2. Plays an important role in the salvage pathway for purine nucleotide biosynthesis. Catalyzes the first committed step in the biosynthesis of AMP from IMP. In Theileria parva (East coast fever infection agent), this protein is Adenylosuccinate synthetase.